The following is a 193-amino-acid chain: Acyl carrier protein phosphodiesterase (193 aa).

This sequence belongs to the AcpH family.

The catalysed reaction is holo-[ACP] + H2O = apo-[ACP] + (R)-4'-phosphopantetheine + H(+). Converts holo-ACP to apo-ACP by hydrolytic cleavage of the phosphopantetheine prosthetic group from ACP. The protein is Acyl carrier protein phosphodiesterase of Shigella boydii serotype 4 (strain Sb227).